Here is a 78-residue protein sequence, read N- to C-terminus: RNA-binding protein Hfq (78 aa).

In terms of domain architecture, Sm spans 10–70; the sequence is DLFLNSVRKQ…ISTIMPSQPV (61 aa).

The protein belongs to the Hfq family. Homohexamer.

RNA chaperone that binds small regulatory RNA (sRNAs) and mRNAs to facilitate mRNA translational regulation in response to envelope stress, environmental stress and changes in metabolite concentrations. Also binds with high specificity to tRNAs. The polypeptide is RNA-binding protein Hfq (Brucella abortus (strain S19)).